The sequence spans 196 residues: Calcineurin B homologous protein 2 (196 aa).

The N-myristoyl glycine moiety is linked to residue Gly-2. EF-hand domains lie at 26–61, 71–106, 111–146, and 152–187; these read ASLLRLYHRFQALDRDEKGFLSRLDLQQIGALAVNP, FPNGSQRLYFAGFARVLAYFRPIDEEDATLRDPKQP, SRMNKLRFAFQLYDLDRDGKISRNEMLQVLRLMVGV, and QLESITDRTVQEADEDGDGAVSFLEFTKSLEKMNIE. Ser-27 carries the phosphoserine modification. The Ca(2+) site is built by Asp-124, Asp-126, Asp-128, Lys-130, and Glu-135. A Nuclear export signal motif is present at residues 137-148; sequence LQVLRLMVGVQV. 4 residues coordinate Ca(2+): Asp-165, Asp-167, Asp-169, and Glu-176.

Belongs to the calcineurin regulatory subunit family. CHP subfamily. In terms of assembly, interacts with PPP3CA. Interacts with SLC9A1/NHE1; the interaction occurs in a calcium-dependent manner. Interacts with SLC9A1/NHE1.

It is found in the cytoplasm. Its subcellular location is the nucleus. The protein localises to the cell membrane. Functions as an integral cofactor in cell pH regulation by controlling plasma membrane-type Na(+)/H(+) exchange activity. Binds to and activates SLC9A1/NHE1 in a serum-independent manner, thus increasing pH and protecting cells from serum deprivation-induced death. Also plays a role in the regulation of cell proliferation and tumor growth by increasing the phosphatase activity of PPP3CA in a calcium-dependent manner. Activator of the calcineurin/NFAT signaling pathway. Involved in the cytoplasmic translocation of the transcription factor NFATC3 to the nucleus. This is Calcineurin B homologous protein 2 (Chp2) from Mus musculus (Mouse).